The sequence spans 261 residues: (3R)-3-hydroxyacyl-CoA dehydrogenase (261 aa).

NAD(+) contacts are provided by residues 15 to 23 (LVTGAGSGI) and 42 to 43 (DL). Position 60 is a phosphoserine (Ser-60). 74-76 (ADV) is an NAD(+) binding site. Ser-156 lines the substrate pocket. Residue Lys-160 is modified to N6-succinyllysine. The active-site Proton acceptor is Tyr-169. Residues 169 to 173 (YAASK) and 202 to 204 (IAT) each bind NAD(+). Position 173 is an N6-succinyllysine (Lys-173).

The protein belongs to the short-chain dehydrogenases/reductases (SDR) family. As to quaternary structure, heterotetramer with CBR4; contains two molecules of HSD17B8 and CBR4. As to expression, widely expressed, particularly abundant in prostate, placenta and kidney. Expressed at protein level in various tissues like brain, cerebellum, heart, lung, kidney, ovary, testis, adrenals and prostate.

The protein localises to the mitochondrion matrix. It catalyses the reaction a (3R)-3-hydroxyacyl-CoA + NAD(+) = a 3-oxoacyl-CoA + NADH + H(+). It carries out the reaction 17beta-estradiol + NAD(+) = estrone + NADH + H(+). The catalysed reaction is testosterone + NAD(+) = androst-4-ene-3,17-dione + NADH + H(+). The enzyme catalyses 17beta-hydroxy-5alpha-androstan-3-one + NAD(+) = 5alpha-androstan-3,17-dione + NADH + H(+). It participates in steroid biosynthesis; estrogen biosynthesis. Its pathway is lipid metabolism; fatty acid biosynthesis. It functions in the pathway lipid metabolism; mitochondrial fatty acid beta-oxidation. Required for the solubility and assembly of the heterotetramer 3-ketoacyl-[acyl carrier protein] (ACP) reductase functional complex (KAR or KAR1) that forms part of the mitochondrial fatty acid synthase (mtFAS). Alpha-subunit of the KAR complex that acts as a scaffold protein required for the stability of carbonyl reductase type-4 (CBR4, beta-subunit of the KAR complex) and for its 3-ketoacyl-ACP reductase activity, thereby participating in mitochondrial fatty acid biosynthesis. Catalyzes the NAD-dependent conversion of (3R)-3-hydroxyacyl-CoA into 3-ketoacyl-CoA (3-oxoacyl-CoA) with no chain length preference; this enzymatic activity is not needed for the KAR function. Prefers (3R)-3-hydroxyacyl-CoA over (3S)-3-hydroxyacyl-CoA and displays enzymatic activity only in the presence of NAD(+). Cooperates with enoyl-CoA hydratase 1 in mitochondria, together they constitute an alternative route to the auxiliary enzyme pathways for the breakdown of Z-PUFA (cis polyunsaturated fatty acid) enoyl-esters. NAD-dependent 17-beta-hydroxysteroid dehydrogenase with highest activity towards estradiol (17beta-estradiol or E2). Has very low activity towards testosterone and dihydrotestosterone (17beta-hydroxy-5alpha-androstan-3-one). Primarily an oxidative enzyme, it can switch to a reductive mode determined in the appropriate physiologic milieu and catalyze the reduction of estrone (E1) to form biologically active 17beta-estradiol. The chain is (3R)-3-hydroxyacyl-CoA dehydrogenase (HSD17B8) from Homo sapiens (Human).